Here is a 259-residue protein sequence, read N- to C-terminus: GEM-like protein 1 (259 aa).

Positions 1 to 11 (MSGQENHDHGR) are enriched in basic and acidic residues. The interval 1–79 (MSGQENHDHG…PSPAPRNTMD (79 aa)) is disordered. The span at 13 to 30 (SSTPAAASEPSKAAAHSS) shows a compositional bias: low complexity. One can recognise a GRAM domain in the interval 138 to 215 (KVFKQTFDCL…NQLKAVNPST (78 aa)).

Belongs to the GEM family. In terms of assembly, interacts with AFH1.

The sequence is that of GEM-like protein 1 (FIP1) from Arabidopsis thaliana (Mouse-ear cress).